The chain runs to 144 residues: HISEMIMQIHHTKHHQAYINNLKACTEKLKQAEQANDVAAMNALLPAIKFNGGGHINHTIFWTNMAPSAGGEPAGPVADAITKEFGSFQAFKDKFSTASVGVKGSGWGWLGYCPKNDKLAVATCQNQDPLQLTHGLIPLLGLDV.

The Mn(2+) site is built by His-10, His-58, and Asp-143.

It belongs to the iron/manganese superoxide dismutase family. As to quaternary structure, homotetramer. Mn(2+) is required as a cofactor.

The protein resides in the mitochondrion matrix. It catalyses the reaction 2 superoxide + 2 H(+) = H2O2 + O2. Its function is as follows. Destroys superoxide anion radicals which are normally produced within the cells and which are toxic to biological systems. The protein is Superoxide dismutase [Mn], mitochondrial of Palinurus vulgaris (European spiny lobster).